We begin with the raw amino-acid sequence, 253 residues long: Tetraspanin-11 (253 aa).

4 consecutive transmembrane segments (helical) span residues 19–39 (LLFI…AVGI), 63–83 (VLIF…GAII), 93–113 (YFCL…LAHV), and 220–240 (LLLM…GMVL).

This sequence belongs to the tetraspanin (TM4SF) family.

The protein resides in the membrane. This is Tetraspanin-11 (Tspan11) from Rattus norvegicus (Rat).